The primary structure comprises 266 residues: Protein crossbronx-like (266 aa).

In terms of domain architecture, UBC core spans Lys15 to Asn178.

This sequence belongs to the ubiquitin-conjugating enzyme family. FTS subfamily.

This is Protein crossbronx-like from Drosophila erecta (Fruit fly).